Reading from the N-terminus, the 618-residue chain is Very-long-chain aldehyde decarbonylase GL1-3 (618 aa).

7 consecutive transmembrane segments (helical) span residues Leu-9–Val-29, Thr-46–Phe-66, Met-91–Thr-111, Gly-121–His-141, Leu-174–Gly-194, Asp-289–Phe-309, and Leu-315–Leu-335. The Fatty acid hydroxylase domain maps to Val-127 to Thr-267.

Belongs to the sterol desaturase family. Homodimer. In terms of tissue distribution, expressed in germinating seeds and stamens.

It is found in the endoplasmic reticulum membrane. The catalysed reaction is a long-chain fatty aldehyde + 2 NADPH + O2 + H(+) = a long-chain alkane + formate + 2 NADP(+) + H2O. Functionally, aldehyde decarbonylase involved in the conversion of aldehydes to alkanes. Core component of a very-long-chain alkane synthesis complex. The sequence is that of Very-long-chain aldehyde decarbonylase GL1-3 from Oryza sativa subsp. japonica (Rice).